Reading from the N-terminus, the 409-residue chain is Transcription termination factor 3, mitochondrial (409 aa).

Residues 1-64 (MALLAQQLSR…KTDRALFSWS (64 aa)) constitute a mitochondrion transit peptide. The segment at 74 to 93 (RKSSTNSTLLPSVSEQPEKI) is disordered.

This sequence belongs to the mTERF family.

It is found in the mitochondrion. Functionally, binds promoter DNA and regulates initiation of transcription. Required for normal mitochondrial transcription and translation, and for normal assembly of mitochondrial respiratory complexes. Required for normal mitochondrial function. Maintains 16S rRNA levels and functions in mitochondrial ribosome assembly by regulating the biogenesis of the 39S ribosomal subunit. In Rattus norvegicus (Rat), this protein is Transcription termination factor 3, mitochondrial (Mterf3).